Consider the following 591-residue polypeptide: NADP-dependent malic enzyme (591 aa).

Tyr-139 functions as the Proton donor in the catalytic mechanism. Position 192 (Arg-192) interacts with NAD(+). Lys-210 serves as the catalytic Proton acceptor. Residues Glu-282, Asp-283, and Asp-306 each contribute to the a divalent metal cation site. Asp-306 lines the NAD(+) pocket. NADP(+) is bound at residue 335–351 (LFLGAGEAGTGIAELIA). Asn-447 lines the NAD(+) pocket.

Belongs to the malic enzymes family. Homotetramer. The cofactor is Mg(2+). Requires Mn(2+) as cofactor.

Its subcellular location is the cytoplasm. The catalysed reaction is (S)-malate + NADP(+) = pyruvate + CO2 + NADPH. It carries out the reaction oxaloacetate + H(+) = pyruvate + CO2. The chain is NADP-dependent malic enzyme from Vitis vinifera (Grape).